The following is a 716-amino-acid chain: Fatty acid oxidation complex subunit alpha (716 aa).

The tract at residues 1–189 (MIYQSPTIQV…KVGAVDAVVA (189 aa)) is enoyl-CoA hydratase/isomerase. Aspartate 296 contributes to the substrate binding site. Positions 311 to 716 (KEVNNAAVLG…AANNGSYYQA (406 aa)) are 3-hydroxyacyl-CoA dehydrogenase. NAD(+) contacts are provided by residues methionine 324, aspartate 343, 400-402 (VVE), lysine 407, and serine 429. Histidine 450 functions as the For 3-hydroxyacyl-CoA dehydrogenase activity in the catalytic mechanism. Position 453 (asparagine 453) interacts with NAD(+). The substrate site is built by asparagine 500 and tyrosine 660.

This sequence in the N-terminal section; belongs to the enoyl-CoA hydratase/isomerase family. It in the C-terminal section; belongs to the 3-hydroxyacyl-CoA dehydrogenase family. As to quaternary structure, heterotetramer of two alpha chains (FadB) and two beta chains (FadA).

The enzyme catalyses a (3S)-3-hydroxyacyl-CoA + NAD(+) = a 3-oxoacyl-CoA + NADH + H(+). It carries out the reaction a (3S)-3-hydroxyacyl-CoA = a (2E)-enoyl-CoA + H2O. The catalysed reaction is a 4-saturated-(3S)-3-hydroxyacyl-CoA = a (3E)-enoyl-CoA + H2O. It catalyses the reaction (3S)-3-hydroxybutanoyl-CoA = (3R)-3-hydroxybutanoyl-CoA. The enzyme catalyses a (3Z)-enoyl-CoA = a 4-saturated (2E)-enoyl-CoA. It carries out the reaction a (3E)-enoyl-CoA = a 4-saturated (2E)-enoyl-CoA. It participates in lipid metabolism; fatty acid beta-oxidation. In terms of biological role, involved in the aerobic and anaerobic degradation of long-chain fatty acids via beta-oxidation cycle. Catalyzes the formation of 3-oxoacyl-CoA from enoyl-CoA via L-3-hydroxyacyl-CoA. It can also use D-3-hydroxyacyl-CoA and cis-3-enoyl-CoA as substrate. This Shewanella baltica (strain OS223) protein is Fatty acid oxidation complex subunit alpha.